The following is a 544-amino-acid chain: Chaperonin GroEL (544 aa).

ATP-binding positions include 30-33 (TLGP), K51, 87-91 (DGTTT), G415, 479-481 (NAA), and D495. The span at 525–537 (PQDTPATAAAPDM) shows a compositional bias: low complexity. The segment at 525–544 (PQDTPATAAAPDMGGMGGMM) is disordered.

It belongs to the chaperonin (HSP60) family. As to quaternary structure, forms a cylinder of 14 subunits composed of two heptameric rings stacked back-to-back. Interacts with the co-chaperonin GroES.

Its subcellular location is the cytoplasm. It carries out the reaction ATP + H2O + a folded polypeptide = ADP + phosphate + an unfolded polypeptide.. Its function is as follows. Together with its co-chaperonin GroES, plays an essential role in assisting protein folding. The GroEL-GroES system forms a nano-cage that allows encapsulation of the non-native substrate proteins and provides a physical environment optimized to promote and accelerate protein folding. In Ruthia magnifica subsp. Calyptogena magnifica, this protein is Chaperonin GroEL.